Here is a 144-residue protein sequence, read N- to C-terminus: Large ribosomal subunit protein uL14 (144 aa).

This sequence belongs to the universal ribosomal protein uL14 family. Part of the 50S ribosomal subunit. Forms a cluster with proteins L3 and L24e, part of which may contact the 16S rRNA in 2 intersubunit bridges.

Its function is as follows. Binds to 23S rRNA. Forms part of two intersubunit bridges in the 70S ribosome. The polypeptide is Large ribosomal subunit protein uL14 (Cenarchaeum symbiosum (strain A)).